Reading from the N-terminus, the 376-residue chain is Na(+)/H(+) antiporter NhaA (376 aa).

11 helical membrane-spanning segments follow: residues 8–28 (FLATEAAGGIILIAAAAAAML), 49–69 (LSLLHWINDALMALFFLLVGL), 87–107 (ILPCIAAAAGMAAPALLYLAF), 117–137 (GWAIPTATDIAFAIGVLALLG), 140–160 (APASLKLFLTTIAIVDDMGAV), 162–182 (IIALAYTAAISGPALLAAIVI), 209–229 (LAVLLSGVHATIAGVLAALAI), 248–268 (PWVAFAIVPLFGFANAGVSFA), 270–290 (IGAEQLLAPLPLGIAAGLFLG), 321–341 (GVALLCGIGFTMSLFIGGLAF), and 349–369 (EVKIGVLGGSILSAIAGYALL).

This sequence belongs to the NhaA Na(+)/H(+) (TC 2.A.33) antiporter family.

It localises to the cell inner membrane. The catalysed reaction is Na(+)(in) + 2 H(+)(out) = Na(+)(out) + 2 H(+)(in). Functionally, na(+)/H(+) antiporter that extrudes sodium in exchange for external protons. This Rhizorhabdus wittichii (strain DSM 6014 / CCUG 31198 / JCM 15750 / NBRC 105917 / EY 4224 / RW1) (Sphingomonas wittichii) protein is Na(+)/H(+) antiporter NhaA.